Reading from the N-terminus, the 266-residue chain is Inositol-1-monophosphatase (266 aa).

Mg(2+)-binding residues include Glu-69, Asp-86, Leu-88, and Asp-89. Glu-69 is a substrate binding site. Residues 88–91, Arg-185, and Asp-214 contribute to the substrate site; that span reads LDGT. Asp-214 is a Mg(2+) binding site.

This sequence belongs to the inositol monophosphatase superfamily. Requires Mg(2+) as cofactor.

It catalyses the reaction a myo-inositol phosphate + H2O = myo-inositol + phosphate. This is Inositol-1-monophosphatase (suhB) from Rhizobium meliloti (strain 1021) (Ensifer meliloti).